The following is a 483-amino-acid chain: Putative (R)-citramalate synthase CimA (483 aa).

The Pyruvate carboxyltransferase domain occupies 1 to 245 (MRDGEQTPGV…DTGIKHEQIY (245 aa)).

Belongs to the alpha-IPM synthase/homocitrate synthase family. As to quaternary structure, homodimer.

The enzyme catalyses pyruvate + acetyl-CoA + H2O = (3R)-citramalate + CoA + H(+). It participates in amino-acid biosynthesis; L-isoleucine biosynthesis; 2-oxobutanoate from pyruvate: step 1/3. Functionally, catalyzes the condensation of pyruvate and acetyl-coenzyme A to form (R)-citramalate. In Methanosarcina acetivorans (strain ATCC 35395 / DSM 2834 / JCM 12185 / C2A), this protein is Putative (R)-citramalate synthase CimA.